The sequence spans 413 residues: Serine hydroxymethyltransferase (413 aa).

(6S)-5,6,7,8-tetrahydrofolate contacts are provided by residues Leu-119 and 123 to 125 (GHL). Position 228 is an N6-(pyridoxal phosphate)lysine (Lys-228). 351–353 (SPF) provides a ligand contact to (6S)-5,6,7,8-tetrahydrofolate.

This sequence belongs to the SHMT family. As to quaternary structure, homodimer. Pyridoxal 5'-phosphate serves as cofactor.

The protein localises to the cytoplasm. The catalysed reaction is (6R)-5,10-methylene-5,6,7,8-tetrahydrofolate + glycine + H2O = (6S)-5,6,7,8-tetrahydrofolate + L-serine. Its pathway is one-carbon metabolism; tetrahydrofolate interconversion. It functions in the pathway amino-acid biosynthesis; glycine biosynthesis; glycine from L-serine: step 1/1. In terms of biological role, catalyzes the reversible interconversion of serine and glycine with tetrahydrofolate (THF) serving as the one-carbon carrier. This reaction serves as the major source of one-carbon groups required for the biosynthesis of purines, thymidylate, methionine, and other important biomolecules. Also exhibits THF-independent aldolase activity toward beta-hydroxyamino acids, producing glycine and aldehydes, via a retro-aldol mechanism. In Lysinibacillus sphaericus (strain C3-41), this protein is Serine hydroxymethyltransferase.